Consider the following 448-residue polypeptide: Phosphoglucosamine mutase (448 aa).

The Phosphoserine intermediate role is filled by S99. S99, D238, D240, and D242 together coordinate Mg(2+). Phosphoserine is present on S99.

The protein belongs to the phosphohexose mutase family. The cofactor is Mg(2+). Post-translationally, activated by phosphorylation.

It carries out the reaction alpha-D-glucosamine 1-phosphate = D-glucosamine 6-phosphate. Functionally, catalyzes the conversion of glucosamine-6-phosphate to glucosamine-1-phosphate. In Marinomonas sp. (strain MWYL1), this protein is Phosphoglucosamine mutase.